Reading from the N-terminus, the 388-residue chain is Gastricsin (388 aa).

A signal peptide spans 1–16; the sequence is MKWMVVAFICLQLLEA. Residues 17–59 constitute a propeptide, activation peptide; that stretch reads TVVKVPLKKFKSIRETMKEKGLLWEFLKTHKHDPARKYRVSDL. Residues 73-385 enclose the Peptidase A1 domain; it reads YFGEISIGTP…DLGNNRVGFA (313 aa). The active site involves Asp91. 2 disulfides stabilise this stretch: Cys104/Cys109 and Cys267/Cys271. Asp276 is a catalytic residue. Cys310 and Cys343 are oxidised to a cystine.

Belongs to the peptidase A1 family.

It localises to the secreted. The catalysed reaction is More restricted specificity than pepsin A, but shows preferential cleavage at Tyr-|-Xaa bonds. High activity on hemoglobin.. With respect to regulation, inhibited by pepstatin. Hydrolyzes a variety of proteins. The sequence is that of Gastricsin (PGC) from Callithrix jacchus (White-tufted-ear marmoset).